We begin with the raw amino-acid sequence, 228 residues long: CD9 antigen (228 aa).

Topologically, residues 1–12 (MPVKGGTKCIKY) are cytoplasmic. Residue Cys-9 is the site of S-palmitoyl cysteine attachment. Residues 13 to 33 (LLFGFNFIFWLAGIAVLAIGL) traverse the membrane as a helical segment. Residues 34–55 (WLRFDSQTKSIFEQETNNNNSS) are Extracellular-facing. N-linked (GlcNAc...) asparagine glycosylation is found at Asn-52 and Asn-53. The helical transmembrane segment at 56-76 (FYTGVYILIGAGALMMLVGFL) threads the bilayer. Residues 77 to 87 (GCCGAVQESQC) are Cytoplasmic-facing. Residues Cys-78, Cys-79, and Cys-87 are each lipidated (S-palmitoyl cysteine). Residues 88–111 (MLGLFFGFLLVIFAIEIAAAIWGY) traverse the membrane as a helical segment. At 112–195 (SHKDEVIKEV…KEVFDNKFHI (84 aa)) the chain is on the extracellular side. 2 cysteine pairs are disulfide-bonded: Cys-152–Cys-181 and Cys-153–Cys-167. A helical transmembrane segment spans residues 196 to 221 (IGAVGIGIAVVMIFGMIFSMILCCAI). 2 S-palmitoyl cysteine lipidation sites follow: Cys-218 and Cys-219. Residues 222 to 228 (RRNREMV) lie on the Cytoplasmic side of the membrane.

This sequence belongs to the tetraspanin (TM4SF) family. Forms both disulfide-linked homodimers and higher homooligomers as well as heterooligomers with other members of the tetraspanin family. Interacts (via the second extracellular domain) with integrin ITGAV:ITGB3. Interacts with integrin ITGA6:ITGB1; interaction takes place in oocytes and is involved in sperm-egg fusion. Part of integrin-tetraspanin complexes composed of CD81, beta-1 and beta-2 integrins in the membrane of monocyte/macrophages. Interacts with CD63; identified in a complex with CD63 and ITGB3. Associates with CR2/CD21 and with PTGFRN/CD9P1. Part of a complex composed of CD9, CD81, PTGFRN and IGSF8. Interacts directly with IGSF8. Interacts with PDPN; this interaction is homophilic and attenuates platelet aggregation and pulmonary metastasis induced by PDPN. Interacts (on T cell side) with CD81 at immunological synapses between antigen-presenting cells and T cells. Palmitoylated at a low, basal level in unstimulated platelets. The level of palmitoylation increases when platelets are activated by thrombin (in vitro). The protein exists in three forms with molecular masses between 22 and 27 kDa, and is known to carry covalently linked fatty acids. Palmitoylation by ZDHHC2 regulates CD9 expression, association with other tetraspanin family proteins and function in cell adhesion.

The protein localises to the cell membrane. It is found in the membrane. It localises to the secreted. The protein resides in the extracellular exosome. Its function is as follows. Integral membrane protein associated with integrins, which regulates different processes, such as sperm-egg fusion, platelet activation and aggregation, and cell adhesion. Present at the cell surface of oocytes and plays a key role in sperm-egg fusion, possibly by organizing multiprotein complexes and the morphology of the membrane required for the fusion. In myoblasts, associates with CD81 and PTGFRN and inhibits myotube fusion during muscle regeneration. In macrophages, associates with CD81 and beta-1 and beta-2 integrins, and prevents macrophage fusion into multinucleated giant cells specialized in ingesting complement-opsonized large particles. Also prevents the fusion between mononuclear cell progenitors into osteoclasts in charge of bone resorption. Acts as a receptor for PSG17. Involved in platelet activation and aggregation. Regulates paranodal junction formation. Involved in cell adhesion, cell motility and tumor metastasis. This Chlorocebus aethiops (Green monkey) protein is CD9 antigen.